We begin with the raw amino-acid sequence, 470 residues long: mRNA export factor ICP27 homolog (470 aa).

Disordered stretches follow at residues 1–31 (MALS…TGGD) and 62–204 (VGDP…DRLN). Residues 71 to 85 (VSFSASPQRAQPSNP) show a composition bias toward polar residues. Composition is skewed to basic residues over residues 94–107 (HGRR…RRNN) and 178–187 (RVHRNRRRGN). Zn(2+) contacts are provided by cysteine 359, histidine 437, cysteine 441, and cysteine 446. The segment at 359 to 446 (CYLSSSGSPT…HKRRCKADTC (88 aa)) adopts a CHC2-type zinc-finger fold.

It belongs to the HHV-1 ICP27 protein family. In terms of assembly, homodimer. Homodimerization is required for transactivation. Associates in a complex with RNA, and host export factors NXF1/TAP and ALYREF; these interactions allow nuclear export of viral transcripts. Interacts with three host shuttling SR proteins SRSF1, SRSF3 and SRSF7. Interacts with host SRPK1. Interacts with IE62; this interaction enhances IE62 transactivation.

It is found in the host cytoplasm. The protein localises to the host nucleus. In terms of biological role, multifunctional regulator of the expression of viral genes that mediates nuclear export of viral intronless mRNAs. This immediate early (EI) protein promotes the nuclear export of viral intronless mRNAs by interacting with mRNAs and host NXF1/TAP. The protein is mRNA export factor ICP27 homolog of Equine herpesvirus 1 (strain Ab4p) (EHV-1).